The primary structure comprises 333 residues: MNSETFSAGPKSAPAPATLTIASRESRLAMWQAEHVRDALRKLYPACDVKILGMTTRGDQILDRTLSKVGGKGLFVKELENALADGRADLAVHSLKDVPMALPDGFALAAIMAREDARDAFVSNDYASLDALPAGAVVGTSSLRREAMLRARYPHLNVLPLRGNLDTRLAKLDRGDYAAIILAAAGLKRLGLEARIRALIDVEDSLPAAGQGALGIEIAAHRSDVAQWLAPLHDPHTALAVEAERMVSRALGGSCEVPLAAHAVWRAGELYLTGRVSTTDGRRVLSAQACGAVMTAADALALGRAVSDELDAQGARDIVNALLAGSQVGKGDA.

Cysteine 255 carries the post-translational modification S-(dipyrrolylmethanemethyl)cysteine.

The protein belongs to the HMBS family. In terms of assembly, monomer. The cofactor is dipyrromethane.

It catalyses the reaction 4 porphobilinogen + H2O = hydroxymethylbilane + 4 NH4(+). Its pathway is porphyrin-containing compound metabolism; protoporphyrin-IX biosynthesis; coproporphyrinogen-III from 5-aminolevulinate: step 2/4. Tetrapolymerization of the monopyrrole PBG into the hydroxymethylbilane pre-uroporphyrinogen in several discrete steps. The polypeptide is Porphobilinogen deaminase (Burkholderia vietnamiensis (strain G4 / LMG 22486) (Burkholderia cepacia (strain R1808))).